The sequence spans 323 residues: Dehydrogenase/reductase SDR family member 7B (323 aa).

Over 1–4 (MDLT) the chain is Cytoplasmic. A helical; Signal-anchor for type II membrane protein transmembrane segment spans residues 5-25 (SWAIFPLLLASIGVYGLYKLL). The Lumenal portion of the chain corresponds to 26–272 (QKLRSGAYLQ…AVGERRKELL (247 aa)). Residues S46 and L48 each contribute to the NAD(+) site. S178 contacts substrate. Y191, K195, and T226 together coordinate NAD(+). Catalysis depends on Y191, which acts as the Proton acceptor.

It belongs to the short-chain dehydrogenases/reductases (SDR) family.

It is found in the endoplasmic reticulum membrane. In terms of biological role, putative oxidoreductase. In Xenopus laevis (African clawed frog), this protein is Dehydrogenase/reductase SDR family member 7B (dhrs7b).